Here is an 886-residue protein sequence, read N- to C-terminus: DNA gyrase subunit A (886 aa).

The 467-residue stretch at Leu35 to Leu501 folds into the Topo IIA-type catalytic domain. Residue Tyr123 is the O-(5'-phospho-DNA)-tyrosine intermediate of the active site. The short motif at Gln528–Gly534 is the GyrA-box element. The disordered stretch occupies residues Val810–Asp860. Positions Asp813–Gln822 are enriched in acidic residues.

The protein belongs to the type II topoisomerase GyrA/ParC subunit family. In terms of assembly, heterotetramer, composed of two GyrA and two GyrB chains. In the heterotetramer, GyrA contains the active site tyrosine that forms a transient covalent intermediate with DNA, while GyrB binds cofactors and catalyzes ATP hydrolysis.

It localises to the cytoplasm. It catalyses the reaction ATP-dependent breakage, passage and rejoining of double-stranded DNA.. Its function is as follows. A type II topoisomerase that negatively supercoils closed circular double-stranded (ds) DNA in an ATP-dependent manner to modulate DNA topology and maintain chromosomes in an underwound state. Negative supercoiling favors strand separation, and DNA replication, transcription, recombination and repair, all of which involve strand separation. Also able to catalyze the interconversion of other topological isomers of dsDNA rings, including catenanes and knotted rings. Type II topoisomerases break and join 2 DNA strands simultaneously in an ATP-dependent manner. The protein is DNA gyrase subunit A of Staphylococcus aureus (strain MRSA252).